A 207-amino-acid chain; its full sequence is Small ribosomal subunit protein uS4 (207 aa).

The region spanning 96–159 is the S4 RNA-binding domain; sequence RRLDNVVYRL…RASTFIADNI (64 aa).

Belongs to the universal ribosomal protein uS4 family. As to quaternary structure, part of the 30S ribosomal subunit. Contacts protein S5. The interaction surface between S4 and S5 is involved in control of translational fidelity.

Its function is as follows. One of the primary rRNA binding proteins, it binds directly to 16S rRNA where it nucleates assembly of the body of the 30S subunit. Functionally, with S5 and S12 plays an important role in translational accuracy. In Leptospira borgpetersenii serovar Hardjo-bovis (strain JB197), this protein is Small ribosomal subunit protein uS4.